A 229-amino-acid polypeptide reads, in one-letter code: Ribonuclease 3 (229 aa).

An RNase III domain is found at 2–130; it reads FEKLQDVLCY…ILGAIFLDGG (129 aa). Position 43 (Glu43) interacts with Mg(2+). Asp47 is an active-site residue. Residues Asp116 and Glu119 each coordinate Mg(2+). The active site involves Glu119. In terms of domain architecture, DRBM spans 157–226; the sequence is DAKSTLQELT…AGLALELLEG (70 aa).

This sequence belongs to the ribonuclease III family. Homodimer. Requires Mg(2+) as cofactor.

The protein resides in the cytoplasm. The enzyme catalyses Endonucleolytic cleavage to 5'-phosphomonoester.. In terms of biological role, digests double-stranded RNA. Involved in the processing of primary rRNA transcript to yield the immediate precursors to the large and small rRNAs (23S and 16S). Processes some mRNAs, and tRNAs when they are encoded in the rRNA operon. Processes pre-crRNA and tracrRNA of type II CRISPR loci if present in the organism. This Oleidesulfovibrio alaskensis (strain ATCC BAA-1058 / DSM 17464 / G20) (Desulfovibrio alaskensis) protein is Ribonuclease 3.